The chain runs to 34 residues: Calcitonin-like peptide 2 (34 aa).

The cysteines at positions 2 and 7 are disulfide-linked. Phe34 carries the post-translational modification Phenylalanine amide.

This is Calcitonin-like peptide 2 from Odorrana schmackeri (Schmacker's frog).